Here is a 266-residue protein sequence, read N- to C-terminus: 15-hydroxyprostaglandin dehydrogenase [NAD(+)] (266 aa).

NAD(+) contacts are provided by residues 12-20 (GAAQGIGKA), 36-37 (DW), 63-65 (CDV), and Asn-91. 2 residues coordinate substrate: Ser-138 and Gln-148. Tyr-151 (proton acceptor) is an active-site residue. Residues 151-155 (YCASK) and 186-188 (VKT) each bind NAD(+).

Belongs to the short-chain dehydrogenases/reductases (SDR) family. Homodimer.

It is found in the cytoplasm. The catalysed reaction is prostaglandin E2 + NAD(+) = 15-oxoprostaglandin E2 + NADH + H(+). It catalyses the reaction (15S)-hydroxy-(5Z,8Z,11Z,13E)-eicosatetraenoate + NAD(+) = 15-oxo-(5Z,8Z,11Z,13E)-eicosatetraenoate + NADH + H(+). The enzyme catalyses (11R)-hydroxy-(5Z,8Z,12E,14Z)-eicosatetraenoate + NAD(+) = 11-oxo-(5Z,8Z,12E,14Z)-eicosatetraenoate + NADH + H(+). It carries out the reaction lipoxin A4 + NAD(+) = 15-oxo-(5S,6R)-dihydroxy-(7E,9E,11Z,13E)-eicosatetraenoate + NADH + H(+). The catalysed reaction is 15-oxo-(5S,6R)-dihydroxy-(7E,9E,11Z)-eicosatrienoate + NADH + H(+) = (5S,6R,15S)-trihydroxy-(7E,9E,11Z)-eicosatrienoate + NAD(+). It catalyses the reaction prostaglandin A1 + NAD(+) = 15-oxo-prostaglandin A1 + NADH + H(+). The enzyme catalyses prostaglandin E1 + NAD(+) = 15-oxoprostaglandin E1 + NADH + H(+). It carries out the reaction 14-hydroxy-(4Z,7Z,10Z,12E,16Z,19Z)-docosahexaenoate + NAD(+) = 14-oxo-(4Z,7Z,10Z,12E,16Z,19Z)-docosahexaenoate + NADH + H(+). The catalysed reaction is resolvin E1 + NAD(+) = 18-oxo-resolvin E1 + NADH + H(+). It catalyses the reaction resolvin D1 + NAD(+) = 8-oxoresolvin D1 + NADH + H(+). The enzyme catalyses resolvin D1 + NAD(+) = 17-oxoresolvin D1 + NADH + H(+). It carries out the reaction resolvin D2 + NAD(+) = 7-oxoresolvin D2 + NADH + H(+). The catalysed reaction is resolvin D2 + NAD(+) = 16-oxoresolvin D2 + NADH + H(+). Functionally, catalyzes the NAD-dependent dehydrogenation (oxidation) of a broad array of hydroxylated polyunsaturated fatty acids (mainly eicosanoids and docosanoids, including prostaglandins, lipoxins and resolvins), yielding their corresponding keto (oxo) metabolites. Decreases the levels of the pro-proliferative prostaglandins such as prostaglandin E2 (whose activity is increased in cancer because of an increase in the expression of cyclooxygenase 2) and generates oxo-fatty acid products that can profoundly influence cell function by abrogating pro-inflammatory cytokine expression. Converts resolvins E1, D1 and D2 to their oxo products, which represents a mode of resolvin inactivation. Resolvin E1 plays important roles during the resolution phase of acute inflammation, while resolvins D1 and D2 have a unique role in obesity-induced adipose inflammation. This chain is 15-hydroxyprostaglandin dehydrogenase [NAD(+)] (Hpgd), found in Rattus norvegicus (Rat).